The chain runs to 959 residues: E3 ubiquitin-protein ligase NEDD4-like (959 aa).

The C2 domain occupies 10–130 (PWHGVCVPVC…TEDPTMERPY (121 aa)). Disordered stretches follow at residues 183-206 (SNDS…WEEK), 248-275 (AAHR…DVPE), and 289-316 (DSLG…EELS). One can recognise a WW 1 domain in the interval 197 to 230 (PPLPPGWEEKVDNLGRTYYVNHNNRTTQWHRPSL). Serine 316 bears the Phosphoserine mark. Position 322 is a phosphothreonine (threonine 322). A Phosphoserine; by WNK1 and WNK4 modification is found at serine 346. One can recognise a WW 2 domain in the interval 369–402 (PGLPSGWEERKDAKGRTYYVNHNNRTTTWTRPIM). The disordered stretch occupies residues 408–478 (GASGSATNSN…YNSPKPQHKV (71 aa)). The residue at position 430 (serine 430) is a Phosphoserine. Serine 432 is modified (phosphoserine; by SGK1). Serine 433 is subject to Phosphoserine; by WNK1 and WNK4. A compositionally biased stretch (basic and acidic residues) spans 444–455 (GAKDSPVRRAVK). Phosphoserine; by SGK1 is present on serine 448. Serine 459, serine 463, serine 467, and serine 471 each carry phosphoserine. WW domains lie at 481 to 514 (SFLP…DPRL) and 532 to 565 (GPLP…DPRL). The 335-residue stretch at 624–958 (RPDVLKARLW…VENAQGFEGV (335 aa)) folds into the HECT domain. Cysteine 926 (glycyl thioester intermediate) is an active-site residue.

In terms of assembly, interacts with UBE2E3. Interacts with NDFIP1; this interaction activates the E3 ubiquitin-protein ligase. Interacts with NDFIP2; this interaction activates the E3 ubiquitin-protein ligase. Interacts (via WW domains) with SCN1A. Interacts (via WW domains) with SCN2A. Interacts (via WW domains) with SCN3A. Interacts (via WW domains) with SCN5A. Interacts (via WW domains) with SCN8A. Interacts (via WW domains) with SCN9A. Interacts (via WW domains) with SCN10A. Interacts (via WW domains) with CLCN5. Interacts with SMAD2. Interacts with SMAD3. Interacts with SMAD6. Interacts with SMAD7. The phosphorylated form interacts with 14-3-3 proteins. Interacts with TNK2. Interacts with WNK1. Interacts with SGK1. Interacts (via C2 domain) with NPC2. Interacts with ARRDC4. Interacts with KCNQ1; promotes internalization of KCNQ1. Interacts (via domains WW1, 3 and 4) with USP36; the interaction inhibits ubiquitination of, at least, NTRK1, KCNQ2 and KCNQ3 by NEDD4L. Interacts with PRRG4 (via cytoplasmic domain). Interacts with LDLRAD3; the interaction is direct. Interacts with TTYH2 and TTYH3. Post-translationally, phosphorylated; which impairs interaction with SCNN. Interaction with YWHAH inhibits dephosphorylation. Auto-ubiquitinated.

Its subcellular location is the cytoplasm. The protein resides in the golgi apparatus. It localises to the endosome. The protein localises to the multivesicular body. The enzyme catalyses S-ubiquitinyl-[E2 ubiquitin-conjugating enzyme]-L-cysteine + [acceptor protein]-L-lysine = [E2 ubiquitin-conjugating enzyme]-L-cysteine + N(6)-ubiquitinyl-[acceptor protein]-L-lysine.. It functions in the pathway protein modification; protein ubiquitination. Activated by NDFIP1- and NDFIP2-binding. In terms of biological role, E3 ubiquitin-protein ligase which accepts ubiquitin from an E2 ubiquitin-conjugating enzyme in the form of a thioester and then directly transfers the ubiquitin to targeted substrates. Inhibits TGF-beta signaling by triggering SMAD2 and TGFBR1 ubiquitination and proteasome-dependent degradation. Promotes ubiquitination and internalization of various plasma membrane channels such as ENaC, Nav1.2, Nav1.3, Nav1.5, Nav1.7, Nav1.8, Kv1.3, KCNH2, EAAT1 or CLC5. Promotes ubiquitination and degradation of SGK1 and TNK2. Ubiquitinates BRAT1 and this ubiquitination is enhanced in the presence of NDFIP1. Plays a role in dendrite formation by melanocytes. Involved in the regulation of TOR signaling. Ubiquitinates TTYH2 and TTYH3 and regulates protein levels of TTYH2. In Pongo abelii (Sumatran orangutan), this protein is E3 ubiquitin-protein ligase NEDD4-like (NEDD4L).